The chain runs to 272 residues: Sugar-phosphatase AraL (272 aa).

It belongs to the HAD-like hydrolase superfamily. Mg(2+) is required as a cofactor.

The catalysed reaction is sugar phosphate + H2O = sugar + phosphate.. The enzyme catalyses O-phospho-L-serine + H2O = L-serine + phosphate. It catalyses the reaction O-phospho-D-serine + H2O = D-serine + phosphate. In terms of biological role, catalyzes the dephosphorylation of C5 and C6 carbon sugars in vitro. Catalyzes the dephosphorylation of 3'-AMP and phosphoserine in vitro. This chain is Sugar-phosphatase AraL (araL), found in Bacillus subtilis (strain 168).